A 246-amino-acid chain; its full sequence is Exosome complex component Rrp41 (246 aa).

Belongs to the RNase PH family. Rrp41 subfamily. In terms of assembly, component of the archaeal exosome complex. Forms a hexameric ring-like arrangement composed of 3 Rrp41-Rrp42 heterodimers. The hexameric ring associates with a trimer of Rrp4 and/or Csl4 subunits.

It localises to the cytoplasm. In terms of biological role, catalytic component of the exosome, which is a complex involved in RNA degradation. Has 3'-&gt;5' exoribonuclease activity. Can also synthesize heteromeric RNA-tails. The protein is Exosome complex component Rrp41 of Pyrobaculum aerophilum (strain ATCC 51768 / DSM 7523 / JCM 9630 / CIP 104966 / NBRC 100827 / IM2).